The following is a 144-amino-acid chain: Granulocyte-macrophage colony-stimulating factor (144 aa).

Residues 1–17 (MWLQSLLLLGTVACSIS) form the signal peptide. Residues serine 22, serine 24, and serine 26 are each glycosylated (O-linked (GalNAc...) serine). Residue threonine 27 is glycosylated (O-linked (GalNAc...) threonine; partial). N-linked (GlcNAc...) asparagine glycans are attached at residues asparagine 44 and asparagine 54. Cystine bridges form between cysteine 71/cysteine 113 and cysteine 105/cysteine 138.

It belongs to the GM-CSF family. Monomer. The signaling GM-CSF receptor complex is a dodecamer of two head-to-head hexamers of two alpha, two beta, and two ligand subunits.

It is found in the secreted. Functionally, cytokine that stimulates the growth and differentiation of hematopoietic precursor cells from various lineages, including granulocytes, macrophages, eosinophils and erythrocytes. This is Granulocyte-macrophage colony-stimulating factor (CSF2) from Homo sapiens (Human).